The following is a 703-amino-acid chain: Meiotic coiled-coil protein 2 (703 aa).

2 stretches are compositionally biased toward polar residues: residues 1–19 and 245–258; these read MQSI…SISE and TNVR…STPL. Disordered stretches follow at residues 1–29, 245–265, and 284–309; these read MQSI…SELN, TNVR…DVDL, and ASTN…RSSS. One can recognise a PUM-HD domain in the interval 331-686; that stretch reads NPSVIPESTS…KVAYLVEKWN (356 aa). Pumilio repeat units lie at residues 361-396, 397-432, 433-468, 469-504, 509-544, 545-580, 581-616, and 625-660; these read NVII…NIVD, SIIS…QMGS, AMLG…AMMD, ELFL…NVMN, ALRG…ECIE, EIIF…RVID, ALLN…LYLK, and RTRQ…LVIT.

This is Meiotic coiled-coil protein 2 (mcp2) from Schizosaccharomyces pombe (strain 972 / ATCC 24843) (Fission yeast).